The chain runs to 336 residues: Dihydroorotate dehydrogenase (quinone) (336 aa).

FMN contacts are provided by residues 62–66 (AGLDK) and Thr-86. Lys-66 lines the substrate pocket. 111–115 (NRMGF) provides a ligand contact to substrate. FMN contacts are provided by Asn-139 and Asn-172. Asn-172 contacts substrate. Ser-175 functions as the Nucleophile in the catalytic mechanism. Asn-177 contributes to the substrate binding site. Residues Lys-217 and Thr-245 each contribute to the FMN site. A substrate-binding site is contributed by 246–247 (NT). Residues Gly-268, Gly-297, and 318 to 319 (YS) each bind FMN.

It belongs to the dihydroorotate dehydrogenase family. Type 2 subfamily. In terms of assembly, monomer. The cofactor is FMN.

Its subcellular location is the cell membrane. It carries out the reaction (S)-dihydroorotate + a quinone = orotate + a quinol. It functions in the pathway pyrimidine metabolism; UMP biosynthesis via de novo pathway; orotate from (S)-dihydroorotate (quinone route): step 1/1. Its function is as follows. Catalyzes the conversion of dihydroorotate to orotate with quinone as electron acceptor. The protein is Dihydroorotate dehydrogenase (quinone) of Shigella flexneri serotype 5b (strain 8401).